The following is a 365-amino-acid chain: Potassium channel subfamily K member 9 (365 aa).

Residues Met1–Thr8 lie on the Cytoplasmic side of the membrane. The chain crosses the membrane as a helical span at residues Leu9–Leu29. The Extracellular segment spans residues Glu30–Ile88. The N-linked (GlcNAc...) asparagine glycan is linked to Asn53. The pore-forming intramembrane region spans Thr89–Pro101. The K(+) site is built by Thr93, Ile94, Gly95, and Tyr96. The segment at Thr93–His98 is selectivity filter 1. Residues Gly102–Lys107 lie on the Extracellular side of the membrane. The chain crosses the membrane as a helical span at residues Ala108–Leu128. The Cytoplasmic portion of the chain corresponds to Gly129–Asn158. A helical transmembrane segment spans residues Met159 to Ser179. Topologically, residues Gln180–Phe194 are extracellular. An intramembrane region (pore-forming) is located at residues Ile195 to Ala207. K(+) is bound by residues Thr199, Ile200, Gly201, and Phe202. Residues Thr199–Asp204 are selectivity filter 2. The Extracellular portion of the chain corresponds to Leu208–Pro218. The helical transmembrane segment at Phe219–Leu239 threads the bilayer. Over Asn240–Val365 the chain is Cytoplasmic. Positions Val243–Thr248 are X-gate.

This sequence belongs to the two pore domain potassium channel (TC 1.A.1.8) family. In terms of assembly, homodimer. Heterodimer with KCNK1. Heterodimer with KCNK3. In terms of tissue distribution, highly expressed in the brain.

It localises to the cell membrane. The protein resides in the mitochondrion inner membrane. It is found in the cell projection. The protein localises to the dendrite. It carries out the reaction K(+)(in) = K(+)(out). The enzyme catalyses Na(+)(in) = Na(+)(out). Inhibited by extracellular acidification. K(+) channel that conducts voltage-dependent outward rectifying currents upon membrane depolarization. Voltage sensing is coupled to K(+) electrochemical gradient in an 'ion flux gating' mode where outward but not inward ion flow opens the gate. Changes ion selectivity and becomes permeable to Na(+) ions in response to extracellular acidification. Protonation of the pH sensor His-98 stabilizes C-type inactivation conformation likely converting the channel from outward K(+)-conducting, to inward Na(+)-conducting to nonconductive state. Homo- and heterodimerizes to form functional channels with distinct regulatory and gating properties. Allows K(+) currents with fast-gating kinetics important for the repolarization and hyperpolarization phases of action potentials. In granule neurons, hyperpolarizes the resting membrane potential to limit intrinsic neuronal excitability, but once the action potential threshold is reached, supports high-frequency action potential firing and increased neuronal excitability. Homomeric and/or heteromeric KCNK3:KCNK9 channels operate in cerebellar granule cells, whereas heteromeric KCNK1:KCNK9 enables currents in hippocampal dentate gyrus granule neurons. Dispensable for central chemosensory respiration i.e. breathing controlled by brainstem CO2/pH, it rather conducts pH-sensitive currents and controls the firing rate of serotonergic raphe neurons involved in potentiation of the respiratory chemoreflex. In retinal ganglion cells, mediates outward rectifying currents that regulate action potentials in response to acidification of the synaptic cleft. Involved in transmission of image-forming and nonimage-forming visual information in the retina. In adrenal gland, contributes to the maintenance of a hyperpolarized resting membrane potential of aldosterone-producing cells at zona glomerulosa and limits aldosterone release as part of a regulatory mechanism that controls arterial blood pressure and electrolyte homeostasis. In Cavia porcellus (Guinea pig), this protein is Potassium channel subfamily K member 9 (KCNK9).